A 103-amino-acid polypeptide reads, in one-letter code: Matrix Gla protein (103 aa).

Positions methionine 1–cysteine 19 are cleaved as a signal peptide. Residue glutamate 21 is modified to 4-carboxyglutamate. 3 positions are modified to phosphoserine: serine 22, serine 25, and serine 28. The 47-residue stretch at arginine 51 to arginine 97 folds into the Gla domain. A 4-carboxyglutamate mark is found at glutamate 56, glutamate 60, glutamate 67, and glutamate 71. An intrachain disulfide couples cysteine 73 to cysteine 79. Residues arginine 97 to lysine 103 constitute a propeptide, removed in mature form; probably by carboxypeptidase N.

Belongs to the osteocalcin/matrix Gla protein family. Requires vitamin K-dependent gamma-carboxylation for its function.

It localises to the secreted. Its function is as follows. Associates with the organic matrix of bone and cartilage. Thought to act as an inhibitor of bone formation. This is Matrix Gla protein (MGP) from Pongo abelii (Sumatran orangutan).